A 290-amino-acid polypeptide reads, in one-letter code: Acetyl-coenzyme A carboxylase carboxyl transferase subunit beta (290 aa).

A CoA carboxyltransferase N-terminal domain is found at 28 to 290 (VMTKCPQCKK…KGGEEGWWRN (263 aa)). Positions 32, 35, 51, and 54 each coordinate Zn(2+). The C4-type zinc-finger motif lies at 32 to 54 (CPQCKKIMYTKELIKNLRVCLSC).

This sequence belongs to the AccD/PCCB family. Acetyl-CoA carboxylase is a heterohexamer composed of biotin carboxyl carrier protein (AccB), biotin carboxylase (AccC) and two subunits each of ACCase subunit alpha (AccA) and ACCase subunit beta (AccD). The cofactor is Zn(2+).

It localises to the cytoplasm. The catalysed reaction is N(6)-carboxybiotinyl-L-lysyl-[protein] + acetyl-CoA = N(6)-biotinyl-L-lysyl-[protein] + malonyl-CoA. It participates in lipid metabolism; malonyl-CoA biosynthesis; malonyl-CoA from acetyl-CoA: step 1/1. Component of the acetyl coenzyme A carboxylase (ACC) complex. Biotin carboxylase (BC) catalyzes the carboxylation of biotin on its carrier protein (BCCP) and then the CO(2) group is transferred by the transcarboxylase to acetyl-CoA to form malonyl-CoA. The protein is Acetyl-coenzyme A carboxylase carboxyl transferase subunit beta of Geobacillus kaustophilus (strain HTA426).